The sequence spans 308 residues: ATP synthase gamma chain (308 aa).

Belongs to the ATPase gamma chain family. In terms of assembly, F-type ATPases have 2 components, CF(1) - the catalytic core - and CF(0) - the membrane proton channel. CF(1) has five subunits: alpha(3), beta(3), gamma(1), delta(1), epsilon(1). CF(0) has three main subunits: a, b and c.

It is found in the cell inner membrane. Functionally, produces ATP from ADP in the presence of a proton gradient across the membrane. The gamma chain is believed to be important in regulating ATPase activity and the flow of protons through the CF(0) complex. The chain is ATP synthase gamma chain from Salinibacter ruber (strain DSM 13855 / M31).